Reading from the N-terminus, the 224-residue chain is Ribosomal RNA large subunit methyltransferase E (224 aa).

Glycine 64, tryptophan 66, aspartate 97, aspartate 113, and aspartate 138 together coordinate S-adenosyl-L-methionine. The active-site Proton acceptor is the lysine 178.

The protein belongs to the class I-like SAM-binding methyltransferase superfamily. RNA methyltransferase RlmE family.

Its subcellular location is the cytoplasm. It catalyses the reaction uridine(2552) in 23S rRNA + S-adenosyl-L-methionine = 2'-O-methyluridine(2552) in 23S rRNA + S-adenosyl-L-homocysteine + H(+). Its function is as follows. Specifically methylates the uridine in position 2552 of 23S rRNA at the 2'-O position of the ribose in the fully assembled 50S ribosomal subunit. The sequence is that of Ribosomal RNA large subunit methyltransferase E from Methylibium petroleiphilum (strain ATCC BAA-1232 / LMG 22953 / PM1).